The following is a 305-amino-acid chain: Methionyl-tRNA formyltransferase (305 aa).

110–113 provides a ligand contact to (6S)-5,6,7,8-tetrahydrofolate; the sequence is SLLP.

This sequence belongs to the Fmt family.

It carries out the reaction L-methionyl-tRNA(fMet) + (6R)-10-formyltetrahydrofolate = N-formyl-L-methionyl-tRNA(fMet) + (6S)-5,6,7,8-tetrahydrofolate + H(+). Attaches a formyl group to the free amino group of methionyl-tRNA(fMet). The formyl group appears to play a dual role in the initiator identity of N-formylmethionyl-tRNA by promoting its recognition by IF2 and preventing the misappropriation of this tRNA by the elongation apparatus. In Ureaplasma parvum serovar 3 (strain ATCC 700970), this protein is Methionyl-tRNA formyltransferase.